The primary structure comprises 104 residues: U20-lycotoxin-Ls1a (104 aa).

The first 30 residues, 1–30, serve as a signal peptide directing secretion; that stretch reads MFSTSDQVSKMNSRILSALLILGIATCVIA. One can recognise a WAP domain in the interval 31-76; the sequence is GGFCPKSRHPQCNLSYKINDCCAQSDCRVGSVCCVEGCGNVCRAES. Intrachain disulfides connect cysteine 34/cysteine 64, cysteine 42/cysteine 68, cysteine 51/cysteine 63, cysteine 52/cysteine 90, and cysteine 57/cysteine 72.

This sequence belongs to the venom protein 11 family. 02 (wap-2) subfamily. Contains 5 disulfide bonds. As to expression, expressed by the venom gland.

It localises to the secreted. In terms of biological role, has antibacterial activity. The protein is U20-lycotoxin-Ls1a of Lycosa singoriensis (Wolf spider).